The following is a 1558-amino-acid chain: Calmodulin-regulated spectrin-associated protein 1-B (1558 aa).

Residues 231-346 (WYWKLVPVRY…FIAELFWWFE (116 aa)) enclose the Calponin-homology (CH) domain. 3 stretches are compositionally biased toward polar residues: residues 400–417 (VQNSPEVCNSNKGSSGFS), 440–450 (ACRNRSNSLTQ), and 504–516 (ASTVTPKHQSHPG). 7 disordered regions span residues 400 to 464 (VQNS…SDKR), 504 to 523 (ASTVTPKHQSHPGQGSVRRI), 551 to 585 (NDITLTNSEDTERQGVTPGAKSIWGRQEDASSDSR), 602 to 675 (AKEK…APGQ), 737 to 790 (TKEL…VASG), 803 to 850 (QRFG…QNKD), and 943 to 968 (DRSKEAEEPEKASCEWAGGGTVSSSP). Residues 602 to 620 (AKEKSISLNKEEESGEGRQ) show a composition bias toward basic and acidic residues. Residues 643–658 (QTLNRTFTPNTSSEFE) show a composition bias toward polar residues. Residues 737 to 772 (TKELHPDKKQHFEEEVESAKLREDMNVKEHEDKDGG) are compositionally biased toward basic and acidic residues. Composition is skewed to low complexity over residues 776-790 (SSPGQQSQVSSVASG) and 812-822 (RSSTSSSQRTT). Residues 849–887 (KDNANMLASELVQLHMQLEEKRRAIESQKKKMEILTARQ) adopt a coiled-coil conformation. The segment covering 943 to 955 (DRSKEAEEPEKAS) has biased composition (basic and acidic residues). Residues 971-1004 (VEEEVDLNECNRSIELLNEAIGSIQQQMMQLSLQ) are a coiled coil. Disordered stretches follow at residues 1041–1131 (FVEP…TFHL), 1257–1293 (LRKQQLEAESEQKRDETRRKAEEERIRKEEEKARREL), 1305–1344 (ELCEEQEQPQPKPKTKPKKQRLKSVVKEEPSIDPLPKCPA), and 1360–1414 (LASV…ITST). Residues 1080 to 1090 (SSTPTPTDSPS) show a composition bias toward low complexity. Residues 1106 to 1115 (DFVQSSVRSE) are compositionally biased toward polar residues. Residues 1243–1303 (AFLLKQQRKA…IKQEYLRKKQ (61 aa)) adopt a coiled-coil conformation. The segment covering 1317 to 1328 (PKTKPKKQRLKS) has biased composition (basic residues). The CKK domain maps to 1421 to 1555 (GPKLFKEPSA…QAKRPAGPKK (135 aa)).

The protein belongs to the CAMSAP1 family.

Its subcellular location is the cytoplasm. It is found in the cytoskeleton. Functionally, key microtubule-organizing protein that specifically binds the minus-end of non-centrosomal microtubules and regulates their dynamics and organization. Specifically recognizes growing microtubule minus-ends and stabilizes microtubules. Acts on free microtubule minus-ends that are not capped by microtubule-nucleating proteins or other factors and protects microtubule minus-ends from depolymerization. In contrast to camsap2 and camsap3, tracks along the growing tips of minus-end microtubules without significantly affecting the polymerization rate: binds at the very tip of the microtubules minus-end and acts as a minus-end tracking protein (-TIP) that dissociates from microtubules after allowing tubulin incorporation. Through interaction with spectrin may regulate neurite outgrowth. The protein is Calmodulin-regulated spectrin-associated protein 1-B (camsap1b) of Danio rerio (Zebrafish).